We begin with the raw amino-acid sequence, 210 residues long: Translation initiation factor IF-3 (210 aa).

The interval 169 to 210 (APKQAPAPKKERTEESAEKAGSAGETEPVPAASAAAEAPANV) is disordered. A compositionally biased stretch (basic and acidic residues) spans 176-186 (PKKERTEESAE). A compositionally biased stretch (low complexity) spans 187-210 (KAGSAGETEPVPAASAAAEAPANV).

Belongs to the IF-3 family. In terms of assembly, monomer.

Its subcellular location is the cytoplasm. Its function is as follows. IF-3 binds to the 30S ribosomal subunit and shifts the equilibrium between 70S ribosomes and their 50S and 30S subunits in favor of the free subunits, thus enhancing the availability of 30S subunits on which protein synthesis initiation begins. This chain is Translation initiation factor IF-3, found in Deinococcus deserti (strain DSM 17065 / CIP 109153 / LMG 22923 / VCD115).